The sequence spans 430 residues: Enolase (430 aa).

Gln165 provides a ligand contact to (2R)-2-phosphoglycerate. The Proton donor role is filled by Glu207. 3 residues coordinate Mg(2+): Asp244, Glu287, and Asp314. 4 residues coordinate (2R)-2-phosphoglycerate: Lys339, Arg368, Ser369, and Lys390. Residue Lys339 is the Proton acceptor of the active site.

The protein belongs to the enolase family. As to quaternary structure, component of the RNA degradosome, a multiprotein complex involved in RNA processing and mRNA degradation. Requires Mg(2+) as cofactor.

It localises to the cytoplasm. It is found in the secreted. The protein resides in the cell surface. It carries out the reaction (2R)-2-phosphoglycerate = phosphoenolpyruvate + H2O. The protein operates within carbohydrate degradation; glycolysis; pyruvate from D-glyceraldehyde 3-phosphate: step 4/5. In terms of biological role, catalyzes the reversible conversion of 2-phosphoglycerate (2-PG) into phosphoenolpyruvate (PEP). It is essential for the degradation of carbohydrates via glycolysis. The sequence is that of Enolase from Xylella fastidiosa (strain M23).